Consider the following 377-residue polypeptide: Queuine tRNA-ribosyltransferase (377 aa).

Residue Asp89 is the Proton acceptor of the active site. Residues 89 to 93 (DSGGF), Asp143, Gln187, and Gly214 each bind substrate. Positions 245 to 251 (GVGKPED) are RNA binding. The active-site Nucleophile is the Asp264. The RNA binding; important for wobble base 34 recognition stretch occupies residues 269–273 (TRNAR). Cys302, Cys304, Cys307, and His333 together coordinate Zn(2+).

Belongs to the queuine tRNA-ribosyltransferase family. In terms of assembly, homodimer. Within each dimer, one monomer is responsible for RNA recognition and catalysis, while the other monomer binds to the replacement base PreQ1. The cofactor is Zn(2+).

It catalyses the reaction 7-aminomethyl-7-carbaguanine + guanosine(34) in tRNA = 7-aminomethyl-7-carbaguanosine(34) in tRNA + guanine. Its pathway is tRNA modification; tRNA-queuosine biosynthesis. Functionally, catalyzes the base-exchange of a guanine (G) residue with the queuine precursor 7-aminomethyl-7-deazaguanine (PreQ1) at position 34 (anticodon wobble position) in tRNAs with GU(N) anticodons (tRNA-Asp, -Asn, -His and -Tyr). Catalysis occurs through a double-displacement mechanism. The nucleophile active site attacks the C1' of nucleotide 34 to detach the guanine base from the RNA, forming a covalent enzyme-RNA intermediate. The proton acceptor active site deprotonates the incoming PreQ1, allowing a nucleophilic attack on the C1' of the ribose to form the product. After dissociation, two additional enzymatic reactions on the tRNA convert PreQ1 to queuine (Q), resulting in the hypermodified nucleoside queuosine (7-(((4,5-cis-dihydroxy-2-cyclopenten-1-yl)amino)methyl)-7-deazaguanosine). The chain is Queuine tRNA-ribosyltransferase from Shewanella piezotolerans (strain WP3 / JCM 13877).